Consider the following 616-residue polypeptide: Pentatricopeptide repeat-containing protein At4g15720 (616 aa).

PPR repeat units lie at residues 63–93, 94–128, 130–164, 165–199, 200–228, 235–269, 270–300, 301–335, 336–371, and 372–402; these read DTFT…MCEP, NVVS…RPVP, NEYT…GLRR, NIVV…GRNV, VSWT…FNAA, NQFM…GYES, NTVV…IRCH, SVIS…RINP, NYVT…GVVP, and DSRH…IEVG. The interval 409–484 is type E motif; it reads LWGALLSAGR…ERACSWIENK (76 aa). Positions 485–515 are type E(+) motif; that stretch reads DSVYVFHAGDLSCDESGEIERFLKDLEKRMK. A type DYW motif region spans residues 522–616; sequence SSSMITTSSS…NGSCTCRDYW (95 aa).

This sequence belongs to the PPR family. PCMP-H subfamily.

The sequence is that of Pentatricopeptide repeat-containing protein At4g15720 (PCMP-H1) from Arabidopsis thaliana (Mouse-ear cress).